Consider the following 203-residue polypeptide: Cytochrome c oxidase assembly protein CtaG (203 aa).

Topologically, residues 1–19 (MDAGKAERRAGNGRRTDGR) are cytoplasmic. The helical; Signal-anchor for type II membrane protein transmembrane segment at 20 to 42 (RHLVVAAACAAFIAAMVGVTYAS) threads the bilayer. At 43 to 203 (VPLYAMFCAL…AAARASGTGG (161 aa)) the chain is on the periplasmic side.

It belongs to the COX11/CtaG family.

It localises to the cell inner membrane. In terms of biological role, exerts its effect at some terminal stage of cytochrome c oxidase synthesis, probably by being involved in the insertion of the copper B into subunit I. The chain is Cytochrome c oxidase assembly protein CtaG from Xanthobacter autotrophicus (strain ATCC BAA-1158 / Py2).